The chain runs to 124 residues: Fluoride-specific ion channel FluC (124 aa).

The next 4 membrane-spanning stretches (helical) occupy residues 4–24 (VLYI…ISIL), 35–55 (FGTL…YALA), 60–80 (IGPE…TTFS), and 100–120 (LNVL…QQLI). Residues Gly74 and Thr77 each coordinate Na(+).

This sequence belongs to the fluoride channel Fluc/FEX (TC 1.A.43) family.

Its subcellular location is the cell inner membrane. The enzyme catalyses fluoride(in) = fluoride(out). Its activity is regulated as follows. Na(+) is not transported, but it plays an essential structural role and its presence is essential for fluoride channel function. Fluoride-specific ion channel. Important for reducing fluoride concentration in the cell, thus reducing its toxicity. In Shewanella amazonensis (strain ATCC BAA-1098 / SB2B), this protein is Fluoride-specific ion channel FluC.